Here is a 210-residue protein sequence, read N- to C-terminus: Large ribosomal subunit protein uL4 (210 aa).

In terms of assembly, part of the 50S ribosomal subunit. Post-translationally, the N-terminus is blocked.

In terms of biological role, one of the primary rRNA binding proteins, this protein initially binds near the 5'-end of the 23S rRNA. It is important during the early stages of 50S assembly. It makes multiple contacts with different domains of the 23S rRNA in the assembled 50S subunit and ribosome. Its function is as follows. Forms part of the polypeptide exit tunnel. This protein can be incorporated into E.coli ribosomes in vivo, which resulted in decreased peptidyltransferase (Ptase) activity of the hybrid ribosomes. The hybrid 50S subunits associate less well with 30S subunits to form the ribosome. This Thermus thermophilus (strain ATCC 27634 / DSM 579 / HB8) protein is Large ribosomal subunit protein uL4 (rplD).